The primary structure comprises 246 residues: MEESLMDVPSTSGTQVYSRKARKRSHSPTKKLRYVKRRFSLLRPEDLSVIVQPTHYVRVTFSDPNMWYLRSGHHLHSVHNWLKPYGGQPVSEYHITLALLNLTDEDLARDFSPIALFLRNVRFELHEFALLRKTLVLNASEIYCANIHRFKPVYRVNTAIPTIKDWLLVQGFSLYHSGLPLHMSISKLHALDDVTRNYIITMPCFRTYPQQMFVTPLAVDVVSIRSSNQGNKQIVHSYPILHHPGF.

Residues 1-28 (MEESLMDVPSTSGTQVYSRKARKRSHSP) form a disordered region. The segment covering 19-28 (RKARKRSHSP) has biased composition (basic residues). Positions 22–38 (RKRSHSPTKKLRYVKRR) match the Nuclear localization motif motif.

Interacts with host KPNA4; this interaction inhibits the nuclear import of NF-kappa-B complex.

It localises to the host nucleus. The protein resides in the host nucleolus. The protein localises to the host cytoplasm. Its function is as follows. Plays a role in the inhibition of host innate immunity by inhibiting the interaction between host IKBKE and MAVS. In turn, this inhibition prevents the production of host interferon beta. Additionally, inhibits host NF-kappa-B by interacting with host KPNA4 and thereby preventing the translocation of the NF-kappa-B complex into the nucleus by this importin. The protein is Non-structural protein ORF4b (ORF4b) of Camelus dromedarius (Dromedary).